The sequence spans 300 residues: Virginiamycin B lyase (300 aa).

Residue His-231 coordinates substrate. A Mg(2+)-binding site is contributed by Glu-270. Residue His-272 is the Proton acceptor of the active site. Position 287 (Glu-287) interacts with Mg(2+).

It belongs to the Vgb family. Monomer. Mg(2+) serves as cofactor.

Its function is as follows. Inactivates the type B streptogramin antibiotics by linearizing the lactone ring at the ester linkage, generating a free phenylglycine carboxylate and converting the threonyl moiety into 2-amino-butenoic acid. In Saccharopolyspora erythraea (strain ATCC 11635 / DSM 40517 / JCM 4748 / NBRC 13426 / NCIMB 8594 / NRRL 2338), this protein is Virginiamycin B lyase.